Reading from the N-terminus, the 147-residue chain is Large ribosomal subunit protein uL15 (147 aa).

Polar residues predominate over residues 1–10 (MYLNTLSPNS). Residues 1-48 (MYLNTLSPNSKSHKKSKRVGRGIGSGFGKTSGRGHKGQKSRSGCKIRR) are disordered. Positions 11-20 (KSHKKSKRVG) are enriched in basic residues. The segment covering 21–31 (RGIGSGFGKTS) has biased composition (gly residues). The span at 32 to 47 (GRGHKGQKSRSGCKIR) shows a compositional bias: basic residues.

The protein belongs to the universal ribosomal protein uL15 family. Part of the 50S ribosomal subunit.

Its function is as follows. Binds to the 23S rRNA. This Buchnera aphidicola subsp. Baizongia pistaciae (strain Bp) protein is Large ribosomal subunit protein uL15.